The sequence spans 67 residues: MPQLDTSTWLIMILSMILTLFITFQLKVSKHYFPTNPEPKHTPLLKNSAPWEEKWTKIYSPLSLPLQ.

A helical transmembrane segment spans residues Thr8 to Phe24. At Lys54 the chain carries N6-acetyllysine; alternate. N6-succinyllysine; alternate is present on Lys54. An N6-acetyllysine modification is found at Lys57.

The protein belongs to the ATPase protein 8 family. Component of the ATP synthase complex composed at least of ATP5F1A/subunit alpha, ATP5F1B/subunit beta, ATP5MC1/subunit c (homooctomer), MT-ATP6/subunit a, MT-ATP8/subunit 8, ATP5ME/subunit e, ATP5MF/subunit f, ATP5MG/subunit g, ATP5MK/subunit k, ATP5MJ/subunit j, ATP5F1C/subunit gamma, ATP5F1D/subunit delta, ATP5F1E/subunit epsilon, ATP5PF/subunit F6, ATP5PB/subunit b, ATP5PD/subunit d, ATP5PO/subunit OSCP. ATP synthase complex consists of a soluble F(1) head domain (subunits alpha(3) and beta(3)) - the catalytic core - and a membrane F(0) domain - the membrane proton channel (subunits c, a, 8, e, f, g, k and j). These two domains are linked by a central stalk (subunits gamma, delta, and epsilon) rotating inside the F1 region and a stationary peripheral stalk (subunits F6, b, d, and OSCP). Interacts with PRICKLE3.

Its subcellular location is the mitochondrion membrane. Its function is as follows. Subunit 8, of the mitochondrial membrane ATP synthase complex (F(1)F(0) ATP synthase or Complex V) that produces ATP from ADP in the presence of a proton gradient across the membrane which is generated by electron transport complexes of the respiratory chain. ATP synthase complex consist of a soluble F(1) head domain - the catalytic core - and a membrane F(1) domain - the membrane proton channel. These two domains are linked by a central stalk rotating inside the F(1) region and a stationary peripheral stalk. During catalysis, ATP synthesis in the catalytic domain of F(1) is coupled via a rotary mechanism of the central stalk subunits to proton translocation. In vivo, can only synthesize ATP although its ATP hydrolase activity can be activated artificially in vitro. Part of the complex F(0) domain. The chain is ATP synthase F(0) complex subunit 8 from Phoca vitulina (Harbor seal).